A 608-amino-acid chain; its full sequence is UvrABC system protein C (608 aa).

Residues 18-96 (NQPGVYRMYN…IKKYKPRYNV (79 aa)) enclose the GIY-YIG domain. The UVR domain occupies 206-241 (KQVIDSLVQHMERASTDLRFEAAARYRDQISALNKV).

This sequence belongs to the UvrC family. Interacts with UvrB in an incision complex.

The protein resides in the cytoplasm. Its function is as follows. The UvrABC repair system catalyzes the recognition and processing of DNA lesions. UvrC both incises the 5' and 3' sides of the lesion. The N-terminal half is responsible for the 3' incision and the C-terminal half is responsible for the 5' incision. This is UvrABC system protein C from Pseudoalteromonas atlantica (strain T6c / ATCC BAA-1087).